The chain runs to 353 residues: G-protein coupled estrogen receptor 1 (353 aa).

The Extracellular segment spans residues M1–Y40. A helical transmembrane segment spans residues I41 to G61. Topologically, residues N62–L81 are cytoplasmic. Residues Y82–F102 form a helical membrane-spanning segment. At N103–A112 the chain is on the extracellular side. A helical membrane pass occupies residues V113 to L133. A disulfide bridge connects residues C115 and C192. Topologically, residues T134 to K160 are cytoplasmic. A helical transmembrane segment spans residues L161–V181. Over Q182–L202 the chain is Extracellular. Residues E203–V223 form a helical membrane-spanning segment. The Cytoplasmic segment spans residues R224–M245. Residues I246–I266 form a helical membrane-spanning segment. Over Q267–H292 the chain is Extracellular. The chain crosses the membrane as a helical span at residues I293 to G313. The Cytoplasmic portion of the chain corresponds to E314–V353.

The protein belongs to the G-protein coupled receptor 1 family. In terms of assembly, homodimer. Heterodimer. Expressed in brain regions that are known to control reproduction and sex behavior. Expressed in ovary, muscle and intestine. Expressed in early germ cells of the testis, including the spermatogonia, spermatocytes, and somatic cells such as Sertoli cells.

It localises to the nucleus. It is found in the cytoplasm. The protein localises to the perinuclear region. The protein resides in the cytoskeleton. Its subcellular location is the cytoplasmic vesicle membrane. It localises to the cell membrane. It is found in the basolateral cell membrane. The protein localises to the endoplasmic reticulum membrane. The protein resides in the early endosome. Its subcellular location is the recycling endosome. It localises to the golgi apparatus. It is found in the trans-Golgi network. The protein localises to the golgi apparatus membrane. The protein resides in the cell projection. Its subcellular location is the dendrite. It localises to the dendritic spine membrane. It is found in the axon. The protein localises to the postsynaptic density. The protein resides in the mitochondrion membrane. In terms of biological role, membrane G-protein coupled estrogen receptor that binds to 17-beta-estradiol (E2) with high affinity, leading to rapid and transient activation of numerous intracellular signaling pathways. Plays a role in the embryonic development of sensory and motor neurons. Specifically induces apoptosis and reduces proliferation of brain cells. Involved in maintenance of meiotic arrest in oocytes. The protein is G-protein coupled estrogen receptor 1 (gper1) of Danio rerio (Zebrafish).